A 950-amino-acid chain; its full sequence is F-box only protein 10 (950 aa).

The 48-residue stretch at Met1–Leu48 folds into the F-box domain. PbH1 repeat units follow at residues Ser198–Gly217 and Val238–Gly260. The disordered stretch occupies residues Ile313–Glu364. The segment covering Gly315–Cys324 has biased composition (polar residues). Phosphoserine occurs at positions 321 and 326. Over residues Gly330 to Arg342 the composition is skewed to basic and acidic residues. Over residues Pro347–Ser357 the composition is skewed to low complexity. PbH1 repeat units lie at residues Val423–Ser444, Asn467–Leu489, Glu490–Lys512, Lys513–Gly535, Asn536–Tyr558, His559–Glu581, Asn582–Arg604, Gly605–Asp627, Glu628–Ser650, Ser651–Ser673, Ile713–Ser735, Ser736–Gln758, Ser760–Phe782, Gln783–Gly805, and Arg828–Gly850.

As to quaternary structure, component of the SCF(FBXO10) complex consisting of CUL1, SKP1 and FBXO10. Interacts with BCL2. Interacts with PRDM1. Particularly highly expressed in B-cells.

The protein localises to the cytoplasm. It functions in the pathway protein modification; protein ubiquitination. Its function is as follows. Substrate-recognition component of the SCF (SKP1-CUL1-F-box protein)-type E3 ubiquitin ligase complex. Mediates the ubiquitination and degradation of BCL2, an antiapoptotic protein, thereby playing a role in apoptosis by controlling the stability of BCL2. Targets also the receptor for advanced glycation end products RAGE for ubiquitination and subsequent lysosomal degradation. Directly controls HGAL/GCSAM ubiquitination and degradation and thereby decreases BCR signaling. This Mus musculus (Mouse) protein is F-box only protein 10 (Fbxo10).